Here is a 247-residue protein sequence, read N- to C-terminus: Mitochondrial inner membrane protease ATP23 (247 aa).

An a divalent metal cation-binding site is contributed by His146. Glu147 is an active-site residue. Position 150 (His150) interacts with a divalent metal cation.

Belongs to the peptidase M76 family.

Its subcellular location is the mitochondrion inner membrane. Functionally, has a dual role in the assembly of mitochondrial ATPase. Acts as a protease that removes N-terminal residues of mitochondrial ATPase CF(0) subunit 6 at the intermembrane space side. Also involved in the correct assembly of the membrane-embedded ATPase CF(0) particle, probably mediating association of subunit 6 with the subunit 9 ring. The polypeptide is Mitochondrial inner membrane protease ATP23 (ATP23) (Eremothecium gossypii (strain ATCC 10895 / CBS 109.51 / FGSC 9923 / NRRL Y-1056) (Yeast)).